Reading from the N-terminus, the 498-residue chain is ATP synthase subunit beta, chloroplastic (498 aa).

Residue 172–179 (GGAGVGKT) coordinates ATP.

The protein belongs to the ATPase alpha/beta chains family. As to quaternary structure, F-type ATPases have 2 components, CF(1) - the catalytic core - and CF(0) - the membrane proton channel. CF(1) has five subunits: alpha(3), beta(3), gamma(1), delta(1), epsilon(1). CF(0) has four main subunits: a(1), b(1), b'(1) and c(9-12).

It localises to the plastid. The protein localises to the chloroplast thylakoid membrane. The catalysed reaction is ATP + H2O + 4 H(+)(in) = ADP + phosphate + 5 H(+)(out). Its function is as follows. Produces ATP from ADP in the presence of a proton gradient across the membrane. The catalytic sites are hosted primarily by the beta subunits. In Oryza nivara (Indian wild rice), this protein is ATP synthase subunit beta, chloroplastic.